A 218-amino-acid polypeptide reads, in one-letter code: Adenylate kinase (218 aa).

Residue 10 to 15 participates in ATP binding; the sequence is GAGKGT. The tract at residues 30–59 is NMP; sequence STGDMLRAAINEGTPLGLEAKKVMDAGKLV. Residues threonine 31, arginine 36, 57–59, 85–88, and glutamine 92 each bind AMP; these read KLV and GFPR. The tract at residues 122-159 is LID; it reads GRRVHPASGRTYHVLFNPPAKEGVDDITGDPLVQREDD. Residues arginine 123 and 132–133 each bind ATP; that span reads TY. Residues arginine 156 and arginine 167 each contribute to the AMP site. Position 203 (glycine 203) interacts with ATP.

Belongs to the adenylate kinase family. As to quaternary structure, monomer.

Its subcellular location is the cytoplasm. It carries out the reaction AMP + ATP = 2 ADP. It participates in purine metabolism; AMP biosynthesis via salvage pathway; AMP from ADP: step 1/1. Its function is as follows. Catalyzes the reversible transfer of the terminal phosphate group between ATP and AMP. Plays an important role in cellular energy homeostasis and in adenine nucleotide metabolism. The chain is Adenylate kinase from Chlorobium phaeobacteroides (strain BS1).